The following is a 726-amino-acid chain: Catalase-peroxidase (726 aa).

The interval 1-33 (MSTSDDIHNTTATGKCPFHQGGHDQSAGAGTTT) is disordered. A cross-link (tryptophyl-tyrosyl-methioninium (Trp-Tyr) (with M-252)) is located at residues 105–226 (WHGAGTYRSI…LGATEMGLIY (122 aa)). Residue His106 is the Proton acceptor of the active site. A cross-link (tryptophyl-tyrosyl-methioninium (Tyr-Met) (with W-105)) is located at residues 226-252 (YVNPEGPDHSGEPLSAAAAIRATFGNM). His267 provides a ligand contact to heme b.

It belongs to the peroxidase family. Peroxidase/catalase subfamily. As to quaternary structure, homodimer or homotetramer. Heme b is required as a cofactor. Formation of the three residue Trp-Tyr-Met cross-link is important for the catalase, but not the peroxidase activity of the enzyme.

It catalyses the reaction H2O2 + AH2 = A + 2 H2O. The catalysed reaction is 2 H2O2 = O2 + 2 H2O. Bifunctional enzyme with both catalase and broad-spectrum peroxidase activity. The chain is Catalase-peroxidase from Shigella boydii serotype 18 (strain CDC 3083-94 / BS512).